The primary structure comprises 497 residues: Cytochrome P450 26A1 (497 aa).

Cys-442 lines the heme pocket.

It belongs to the cytochrome P450 family. Requires heme as cofactor. Expressed in most fetal and adult tissues with highest levels in adult liver, heart, pituitary gland, adrenal gland, placenta and regions of the brain. Expressed at high levels in lung, pancreas, skin and uterus (at protein level). Lower expression level is detected in spleen, kidney, intestine and adipose tissue (at protein level).

It localises to the endoplasmic reticulum membrane. Its subcellular location is the microsome membrane. It catalyses the reaction all-trans-retinoate + reduced [NADPH--hemoprotein reductase] + O2 = all-trans-(4S)-hydroxyretinoate + oxidized [NADPH--hemoprotein reductase] + H2O + H(+). The catalysed reaction is all-trans-(4S)-hydroxyretinoate + reduced [NADPH--hemoprotein reductase] + O2 = all-trans-(4S,16)-dihydroxyretinoate + oxidized [NADPH--hemoprotein reductase] + H2O + H(+). The enzyme catalyses all-trans-retinoate + reduced [NADPH--hemoprotein reductase] + O2 = all-trans-18-hydroxyretinoate + oxidized [NADPH--hemoprotein reductase] + H2O + H(+). In terms of biological role, a cytochrome P450 monooxygenase involved in the metabolism of retinoates (RAs), the active metabolites of vitamin A, and critical signaling molecules in animals. RAs exist as at least four different isomers: all-trans-RA (atRA), 9-cis-RA, 13-cis-RA, and 9,13-dicis-RA, where atRA is considered to be the biologically active isomer, although 9-cis-RA and 13-cis-RA also have activity. Catalyzes the hydroxylation of atRA primarily at C-4 and C-18, thereby contributing to the regulation of atRA homeostasis and signaling. Hydroxylation of atRA limits its biological activity and initiates a degradative process leading to its eventual elimination. Involved in the convertion of atRA to all-trans-4-oxo-RA. Able to metabolize other RAs such as 9-cis, 13-cis and 9,13-di-cis RA. Can oxidize all-trans-13,14-dihydroretinoate (DRA) to metabolites which could include all-trans-4-oxo-DRA, all-trans-4-hydroxy-DRA, all-trans-5,8-epoxy-DRA, and all-trans-18-hydroxy-DRA. May play a role in the oxidative metabolism of xenobiotics such as tazarotenic acid. The polypeptide is Cytochrome P450 26A1 (Homo sapiens (Human)).